We begin with the raw amino-acid sequence, 123 residues long: UPF0738 protein BALH_1059 (123 aa).

Belongs to the UPF0738 family.

This is UPF0738 protein BALH_1059 from Bacillus thuringiensis (strain Al Hakam).